Consider the following 559-residue polypeptide: MTQFTQNTAMPSSLWQYWRGLSGWNFYFLVKFGLLWAGYLNFHPLLNLVFAAFLLMPLPRYSLHRLRHWIALPIGFALFWHDTWLPGPESIMSQGSQVAGFSTDYLIDLVTRFINWQMIGAIFVLLVAWLFLSQWIRITVFVVAILLWLNVLTLAGPSFSLWPAGQPTTTVTTTGGNAAATVAATGGAPVVGDMPAQTAPPTTANLNAWLNNFYNAEAKRKSTFPSSLPADAQPFELLVINICSLSWSDIEAAGLMSHPLWSHFDIEFKNFNSATSYSGPAAIRLLRASCGQTSHTNLYQPANNDCYLFDNLSKLGFTQHLMMGHNGQFGGFLKEVRENGGMQSELMDQTNLPVILLGFDGSPVYDDTAVLNRWLDVTEKDKNSRSATFYNTLPLHDGNHYPGVSKTADYKARAQKFFDELDAFFTELEKSGRKVMVVVVPEHGGALKGDRMQVSGLRDIPSPSITDVPVGVKFFGMKAPHQGAPIVIEQPSSFLAISDLVVRVLDGKIFTEDNVDWKKLTSGLPQTAPVSENSNAVVIQYQDKPYVRLNGGDWVPYPQ.

Helical transmembrane passes span 34–54 (LLWA…AAFL), 68–88 (HWIA…LPGP), 113–133 (FINW…LFLS), and 138–158 (ITVF…AGPS).

It localises to the cell inner membrane. The polypeptide is Cellulose biosynthesis protein BcsG (bcsG) (Escherichia coli (strain K12)).